The primary structure comprises 182 residues: Putative manganese efflux pump MntP (182 aa).

Transmembrane regions (helical) follow at residues L6–G26, I37–V57, H71–L91, I101–L121, I131–I151, and Y162–I182.

Belongs to the MntP (TC 9.B.29) family.

The protein resides in the cell membrane. Functionally, probably functions as a manganese efflux pump. This chain is Putative manganese efflux pump MntP, found in Bacillus thuringiensis subsp. konkukian (strain 97-27).